We begin with the raw amino-acid sequence, 554 residues long: GPI alpha-1,2-mannosyltransferase 3 (554 aa).

A glycan (N-linked (GlcNAc...) asparagine) is linked at asparagine 26. The next 9 membrane-spanning stretches (helical) occupy residues 63–83 (LLLF…TSFV), 136–156 (VQLL…VADV), 192–212 (LTNT…PLEG), 224–244 (LVAL…PLLF), 255–275 (DLIL…SLMI), 315–335 (GFPV…YLAP), 340–360 (ILLV…HKEF), 362–382 (FIYP…THLK), and 387–407 (PALS…GLVH). An N-linked (GlcNAc...) asparagine glycan is attached at asparagine 427.

It belongs to the glycosyltransferase 22 family. PIGB subfamily.

It is found in the endoplasmic reticulum membrane. It participates in glycolipid biosynthesis; glycosylphosphatidylinositol-anchor biosynthesis. Functionally, alpha-1,2-mannosyltransferase that catalyzes the transfer of the third mannose, via an alpha-1,2 bond, from a dolichol-phosphate-mannose (Dol-P-Man) to an alpha-D-Man-(1-&gt;6)-2-PEtn-alpha-D-Man-(1-&gt;4)-alpha-D-GlcN-(1-&gt;6)-(1-radyl,2-acyl-sn-glycero-3-phospho)-2-acyl-inositol intermediate to generate an alpha-D-Man-(1-&gt;2)-alpha-D-Man-(1-&gt;6)-2-PEtn-alpha-D-Man-(1-&gt;4)-alpha-D-GlcN-(1-&gt;6)-(1-radyl,2-acyl-sn-glycero-3-phospho)-2-acyl-inositol (also termed H6) and participates in the nineth step of the glycosylphosphatidylinositol-anchor biosynthesis. May also add the third mannose to an alpha-D-Man-(1-&gt;6)-alpha-D-Man-(1-&gt;4)-alpha-D-GlcN-(1-&gt;6)-(1-radyl,2-acyl-sn-glycero-3-phospho)-2-acyl-inositol (also termed H3) intermediate generating an alpha-D-Man-(1-&gt;2)-alpha-D-Man-(1-&gt;6)-alpha-D-Man-(1-&gt;4)-alpha-D-GlcN-(1-&gt;6)-(1-radyl,2-acyl-sn-glycero-3-phospho)-2-acyl-inositol (also termed H4). The protein is GPI alpha-1,2-mannosyltransferase 3 of Homo sapiens (Human).